The sequence spans 337 residues: Adenosine deaminase (337 aa).

Residues H15 and H17 each coordinate Zn(2+). Substrate contacts are provided by H17, D19, and G172. H199 is a binding site for Zn(2+). The active-site Proton donor is the E202. D279 lines the Zn(2+) pocket.

The protein belongs to the metallo-dependent hydrolases superfamily. Adenosine and AMP deaminases family. Adenosine deaminase subfamily. The cofactor is Zn(2+).

The catalysed reaction is adenosine + H2O + H(+) = inosine + NH4(+). It catalyses the reaction 2'-deoxyadenosine + H2O + H(+) = 2'-deoxyinosine + NH4(+). Its function is as follows. Catalyzes the hydrolytic deamination of adenosine and 2-deoxyadenosine. The chain is Adenosine deaminase from Enterococcus faecalis (strain ATCC 700802 / V583).